We begin with the raw amino-acid sequence, 397 residues long: Acetate kinase (397 aa).

Residue asparagine 8 participates in Mg(2+) binding. Lysine 15 serves as a coordination point for ATP. Substrate is bound at residue arginine 90. Aspartate 147 functions as the Proton donor/acceptor in the catalytic mechanism. Residue histidine 207–glycine 211 coordinates ATP. A Mg(2+)-binding site is contributed by glutamate 382.

Belongs to the acetokinase family. Homodimer. Mg(2+) is required as a cofactor. The cofactor is Mn(2+).

The protein resides in the cytoplasm. The catalysed reaction is acetate + ATP = acetyl phosphate + ADP. The protein operates within metabolic intermediate biosynthesis; acetyl-CoA biosynthesis; acetyl-CoA from acetate: step 1/2. In terms of biological role, catalyzes the formation of acetyl phosphate from acetate and ATP. Can also catalyze the reverse reaction. The protein is Acetate kinase of Lactiplantibacillus plantarum (strain ATCC BAA-793 / NCIMB 8826 / WCFS1) (Lactobacillus plantarum).